The following is a 339-amino-acid chain: Phenylalanine--tRNA ligase alpha subunit (339 aa).

Glu-250 contributes to the Mg(2+) binding site.

This sequence belongs to the class-II aminoacyl-tRNA synthetase family. Phe-tRNA synthetase alpha subunit type 1 subfamily. Tetramer of two alpha and two beta subunits. Mg(2+) is required as a cofactor.

The protein localises to the cytoplasm. It catalyses the reaction tRNA(Phe) + L-phenylalanine + ATP = L-phenylalanyl-tRNA(Phe) + AMP + diphosphate + H(+). This is Phenylalanine--tRNA ligase alpha subunit from Bacteroides thetaiotaomicron (strain ATCC 29148 / DSM 2079 / JCM 5827 / CCUG 10774 / NCTC 10582 / VPI-5482 / E50).